We begin with the raw amino-acid sequence, 502 residues long: UPF0371 protein CLM_0396 (502 aa).

Belongs to the UPF0371 family.

In Clostridium botulinum (strain Kyoto / Type A2), this protein is UPF0371 protein CLM_0396.